The primary structure comprises 518 residues: Glutamate--cysteine ligase (518 aa).

It belongs to the glutamate--cysteine ligase type 1 family. Type 1 subfamily.

It catalyses the reaction L-cysteine + L-glutamate + ATP = gamma-L-glutamyl-L-cysteine + ADP + phosphate + H(+). The protein operates within sulfur metabolism; glutathione biosynthesis; glutathione from L-cysteine and L-glutamate: step 1/2. The sequence is that of Glutamate--cysteine ligase from Klebsiella pneumoniae (strain 342).